The primary structure comprises 804 residues: Probable replication endonuclease from prophage-like region (804 aa).

Residues Tyr-498 and Tyr-502 each act as O-(5'-phospho-DNA)-tyrosine intermediate in the active site.

This sequence belongs to the phage GPA family.

In terms of biological role, possible endonuclease which induces a single-strand cut and initiates DNA replication. This chain is Probable replication endonuclease from prophage-like region, found in Shigella boydii serotype 4 (strain Sb227).